The chain runs to 148 residues: Small ribosomal subunit protein eS19 (148 aa).

It belongs to the eukaryotic ribosomal protein eS19 family. As to quaternary structure, part of the 30S ribosomal subunit.

In terms of biological role, may be involved in maturation of the 30S ribosomal subunit. This Methanocaldococcus jannaschii (strain ATCC 43067 / DSM 2661 / JAL-1 / JCM 10045 / NBRC 100440) (Methanococcus jannaschii) protein is Small ribosomal subunit protein eS19.